The sequence spans 764 residues: 5-methyltetrahydropteroyltriglutamate--homocysteine methyltransferase (764 aa).

5-methyltetrahydropteroyltri-L-glutamate is bound by residues 16 to 19 and K121; that span reads RELK. Residues 440-442 and E493 contribute to the L-homocysteine site; that span reads IGS. L-methionine contacts are provided by residues 440–442 and E493; that span reads IGS. Residues 524–525 and W570 each bind 5-methyltetrahydropteroyltri-L-glutamate; that span reads RC. D608 is a binding site for L-homocysteine. D608 is a binding site for L-methionine. E614 contacts 5-methyltetrahydropteroyltri-L-glutamate. Zn(2+) contacts are provided by H650, C652, and E674. The Proton donor role is filled by H703. C735 contributes to the Zn(2+) binding site.

The protein belongs to the vitamin-B12 independent methionine synthase family. Zn(2+) serves as cofactor.

It catalyses the reaction 5-methyltetrahydropteroyltri-L-glutamate + L-homocysteine = tetrahydropteroyltri-L-glutamate + L-methionine. It functions in the pathway amino-acid biosynthesis; L-methionine biosynthesis via de novo pathway; L-methionine from L-homocysteine (MetE route): step 1/1. Catalyzes the transfer of a methyl group from 5-methyltetrahydrofolate to homocysteine resulting in methionine formation. The chain is 5-methyltetrahydropteroyltriglutamate--homocysteine methyltransferase from Burkholderia orbicola (strain MC0-3).